The primary structure comprises 1121 residues: Cuscuta receptor 1 (1121 aa).

A signal peptide spans 1–20 (MGNIKFLLLVFFLIVVVVNG). The Extracellular portion of the chain corresponds to 21–1058 (CWEEERNALL…EESSELEDIQ (1038 aa)). N-linked (GlcNAc...) asparagine glycosylation occurs at asparagine 91. LRR repeat units follow at residues 98 to 122 (FKSL…GFSK), 126 to 152 (LPNL…CWIS), 185 to 209 (LSNL…ALGE), 210 to 233 (LRNL…SLKI), 234 to 259 (FPSL…IIDL), 260 to 282 (SNLE…KGNK), 284 to 308 (MTSL…SLKS), and 309 to 331 (FSSL…IYAL). Asparagine 224 is a glycosylation site (N-linked (GlcNAc...) asparagine). 3 N-linked (GlcNAc...) asparagine glycosylation sites follow: asparagine 298, asparagine 321, and asparagine 333. The stretch at 334–360 (LSTVEYLYFKGSSLNDNFLPNIGQMTS) is one LRR 9 repeat. 2 N-linked (GlcNAc...) asparagine glycosylation sites follow: asparagine 372 and asparagine 406. LRR repeat units lie at residues 383–406 (LKYI…CLGN), 407–432 (LTSL…IWRR), 433–457 (LTSL…QFSD), 459–479 (KKLI…EYQN), 507–531 (QYDL…LLEN), 556–580 (HLHL…MSLA), 581–605 (FPKL…ISGI), 607–628 (LTIL…LAVV), 630–654 (SPQL…EFRP), 655–678 (HVLS…VFLS), 680–701 (LITL…TRDN), 702–725 (RRLL…ICNL), 726–749 (KIIN…VSSL), 751–772 (LKHI…IFNF), 773–796 (SSLI…IGSL), 797–820 (SNLN…ICML), 822–846 (NLSI…YLTQ), 914–938 (LKYM…LGNM), 939–961 (SNIH…TFSN), 962–986 (LQEI…LLEL), and 988–1012 (SLAV…QFGT). 3 N-linked (GlcNAc...) asparagine glycosylation sites follow: asparagine 531, asparagine 576, and asparagine 588. An N-linked (GlcNAc...) asparagine glycan is attached at asparagine 689. Asparagine 771 carries N-linked (GlcNAc...) asparagine glycosylation. 7 N-linked (GlcNAc...) asparagine glycosylation sites follow: asparagine 822, asparagine 937, asparagine 945, asparagine 976, asparagine 998, asparagine 1014, and asparagine 1041. Residues 1059 to 1079 (CFYIGFVVSFGAILLGLAAAL) traverse the membrane as a helical segment. The Cytoplasmic segment spans residues 1080-1121 (CLNRHWRRAWFRMIEALMFYCYYFVLDNIVTPIKSRWYKNVG).

Belongs to the RLP family. As to quaternary structure, interacts with an 11 kDa glycine-rich protein (GRP) of C.reflexa. Interacts with SOBIR1 and SOBIR1-like kinases; presence or absence of GRP has no effect on interaction.

It is found in the cell membrane. Its subcellular location is the cell surface. In terms of biological role, involved in plant defense. Contributes to resistance against parasitic plant C.reflexa. Acts as a receptor for the 11 kDa glycine-rich protein (GRP) of C.reflexa inducing immune responses such as emission of stress-related phytohormone ethylene, reactive oxygen species (ROS) release, and hypersensitive cell death. Recognizes a specific pathogen-associated molecular pattern (PAMP), a cysteine-rich peptide 21 (crip21), from GRP located on the cell wall of C.reflexa. The polypeptide is Cuscuta receptor 1 (Solanum lycopersicum (Tomato)).